Here is a 53-residue protein sequence, read N- to C-terminus: Light-harvesting protein B-808/866 beta chain (53 aa).

Residue Met1 is modified to N-formylmethionine. At 1–25 (MRDDDDLVPPKWRPLFNNQDWLLHD) the chain is on the cytoplasmic side. The a bacteriochlorophyll site is built by His24 and His42. The helical transmembrane segment at 26 to 48 (IVVKSFYGFGVIAAIAHLLVYLW) threads the bilayer. Residues 49–53 (KPWLP) are Periplasmic-facing.

The protein belongs to the antenna complex beta subunit family. In terms of assembly, the core complex is formed by different alpha and beta chains, binding bacteriochlorophyll molecules, and arranged most probably in tetrameric structures disposed around the reaction center. The non-pigmented gamma chains may constitute additional components.

The protein localises to the cell membrane. Functionally, antenna complexes are light-harvesting systems, which transfer the excitation energy to the reaction centers. The sequence is that of Light-harvesting protein B-808/866 beta chain (puf2B) from Chloroflexus aurantiacus (strain ATCC 29366 / DSM 635 / J-10-fl).